Reading from the N-terminus, the 508-residue chain is Maturase K (508 aa).

The protein belongs to the intron maturase 2 family. MatK subfamily.

Its subcellular location is the plastid. The protein resides in the chloroplast. Functionally, usually encoded in the trnK tRNA gene intron. Probably assists in splicing its own and other chloroplast group II introns. The protein is Maturase K of Antirrhinum majus (Garden snapdragon).